A 774-amino-acid chain; its full sequence is Alpha,alpha-trehalose phosphorylase (774 aa).

Position 369 to 370 (369 to 370 (WD)) interacts with substrate. Residue E498 is the Proton donor of the active site. 610-611 (KQ) contacts substrate.

The protein belongs to the glycosyl hydrolase 65 family. In terms of assembly, homodimer.

The enzyme catalyses alpha,alpha-trehalose + phosphate = beta-D-glucose 1-phosphate + D-glucose. It functions in the pathway glycan degradation; trehalose degradation. Inhibited by Cu(2+), Hg(2+), Mg(2+), Mn(2+), Pb(2+) and Zn(2+). Catalyzes the reversible phosphorolytic cleavage of trehalose. Phosphorolysis is specific for trehalose, but D-xylose, D-galactose, L-arabinose, D-fucose, L-fucose, D-glucosamine and 2-deoxy D-glucose can act as substitutes for D-glucose in the synthetic reaction. This chain is Alpha,alpha-trehalose phosphorylase (treP), found in Thermoanaerobacter brockii (Thermoanaerobium brockii).